A 586-amino-acid chain; its full sequence is Proton channel OTOP1 (586 aa).

The Cytoplasmic segment spans residues 1–52; sequence MVEHGGTDSMWLNKYNPAAASSASSSSSSDAENKLFSRLKVSLTKKYPQKNA. A helical transmembrane segment spans residues 53 to 74; the sequence is ELLSAQYGTNLLLLGVSVMLAL. Residues 75–82 are Extracellular-facing; it reads AAQSGPVK. A helical transmembrane segment spans residues 83 to 106; it reads EEHLLSFITVLMLVQLVWMLCYMI. The Cytoplasmic segment spans residues 107–124; it reads RRERERSPVPERDAHAGA. Residues 125–147 traverse the membrane as a helical segment; that stretch reads SWIRGGLTMLALLSLIMDAFRIG. At 148 to 157 the chain is on the extracellular side; sequence YFVGYHSCIS. The helical transmembrane segment at 158-182 threads the bilayer; sequence AALGVYPIVHALHTISQVHFLWFHI. Residues 183 to 190 lie on the Cytoplasmic side of the membrane; the sequence is KDVIKKYE. Residues 191 to 217 traverse the membrane as a helical segment; sequence TFERFGVIHAVFTNLLLWCNGVMSETE. Residues 218–255 are Extracellular-facing; it reads HFMHNHRRRLIEMGYANLSTVDVQPHCNCTTSVCSMFS. Residues 256–281 traverse the membrane as a helical segment; that stretch reads TSLYYLYPFNIEYHIFVSAMLFVMWK. The Cytoplasmic segment spans residues 282–303; the sequence is NIGRTLDRHSNRKRRSTGSTGL. The chain crosses the membrane as a helical span at residues 304-326; it reads LLGPLGGLVALASSVSVLVVYLI. Residues 327 to 336 lie on the Extracellular side of the membrane; it reads HLEKTEEMHE. The chain crosses the membrane as a helical span at residues 337–362; sequence AAVSMFYYYGVAMMACMCVGSGTGLL. Residues 363–380 are Cytoplasmic-facing; that stretch reads VYRMENRPMDTGSNPART. Residues 381–405 traverse the membrane as a helical segment; the sequence is LDTELLLASSLGSWLMSWCSVVASV. Over 406 to 417 the chain is Extracellular; that stretch reads AEAGQKSPSFSW. A helical membrane pass occupies residues 418 to 438; it reads TSLTYSLLLVLEKCIQNLFIV. Residues 439 to 518 are Cytoplasmic-facing; that stretch reads ESLYRRHSEE…TPGRKRQILK (80 aa). The segment at 484 to 505 is disordered; it reads PAAGSHALSRKQPDAPLPAGQR. A helical membrane pass occupies residues 519-537; sequence NICMFLFMCNISLWILPAF. The Extracellular portion of the chain corresponds to 538 to 555; it reads GCRPQYDNPLENETFGTS. The chain crosses the membrane as a helical span at residues 556-579; it reads VWTTVLNVAIPLNLFYRMHSVASL. The Cytoplasmic portion of the chain corresponds to 580 to 586; it reads FEVFRKV.

This sequence belongs to the otopetrin family. In terms of assembly, homodimer.

Its subcellular location is the cell membrane. The protein localises to the cell projection. It is found in the microvillus. The enzyme catalyses H(+)(in) = H(+)(out). With respect to regulation, activated by both acid and alkali, with proton influx in response to extracellular acid and proton efflux during alkali stimulation. Inhibited by Zn(2+); this inhibition is thought to be pH-sensitive. Currents evoked in response to mild acid (pH 6.0) stimulus may also be mildly potentiated by exposure to Zn(2+). Activated by NH(4)Cl. Functionally, proton-selective ion channel. Biphasically modulated by acid and alkali, mediating proton influx and efflux in response to extracellular acid and base stimulation, respectively. May be involved in acid and base perception. Sensor for ammonium chloride (NH(4)Cl) in taste receptor cells. NH(4)Cl acts by increasing the intracellular pH, thereby generating a driving force for proton entry through OTOP1 channel. Plays a role in the regulation of Ca(2+) flux in response to purigenic (ATP, ADP and UDP) stimuli, leading to increase in cytosolic Ca(2+) due to influx of extracellular calcium. May play this role by inhibiting P2Y purinoceptor-mediated Ca(2+) release in a Ca(2+)-dependent manner and promote an influx of Ca(2+) in response to ATP. Through this mechanism and possibly others, plays a role in the formation and function of calcium carbonate-based structures in the vestibular system of the inner ear, called otoconia, that sense gravity and linear acceleration. The sequence is that of Proton channel OTOP1 from Danio rerio (Zebrafish).